The chain runs to 206 residues: Small ribosomal subunit protein uS4 (206 aa).

Residues 96–156 enclose the S4 RNA-binding domain; it reads GRLDNVVYRM…EKSKNQLRIQ (61 aa).

The protein belongs to the universal ribosomal protein uS4 family. In terms of assembly, part of the 30S ribosomal subunit. Contacts protein S5. The interaction surface between S4 and S5 is involved in control of translational fidelity.

Functionally, one of the primary rRNA binding proteins, it binds directly to 16S rRNA where it nucleates assembly of the body of the 30S subunit. With S5 and S12 plays an important role in translational accuracy. This chain is Small ribosomal subunit protein uS4, found in Saccharophagus degradans (strain 2-40 / ATCC 43961 / DSM 17024).